Reading from the N-terminus, the 340-residue chain is Nuclear hormone receptor family member nhr-268 (340 aa).

The nuclear receptor DNA-binding region spans Met-1–Asp-75. NR C4-type zinc fingers lie at residues Cys-3–Cys-23 and Cys-39–Cys-58. In terms of domain architecture, NR LBD spans Lys-98–His-337.

Belongs to the nuclear hormone receptor family.

It is found in the nucleus. Its function is as follows. Orphan nuclear receptor. This is Nuclear hormone receptor family member nhr-268 (nhr-268) from Caenorhabditis elegans.